A 202-amino-acid chain; its full sequence is dITP/XTP pyrophosphatase (202 aa).

11 to 16 (TNNANK) serves as a coordination point for substrate. The Proton acceptor role is filled by D73. D73 serves as a coordination point for Mg(2+). Residues S74, 155–158 (FGYD), K178, and 183–184 (HR) contribute to the substrate site.

Belongs to the HAM1 NTPase family. In terms of assembly, homodimer. Requires Mg(2+) as cofactor.

The enzyme catalyses XTP + H2O = XMP + diphosphate + H(+). It catalyses the reaction dITP + H2O = dIMP + diphosphate + H(+). The catalysed reaction is ITP + H2O = IMP + diphosphate + H(+). Its function is as follows. Pyrophosphatase that catalyzes the hydrolysis of nucleoside triphosphates to their monophosphate derivatives, with a high preference for the non-canonical purine nucleotides XTP (xanthosine triphosphate), dITP (deoxyinosine triphosphate) and ITP. Seems to function as a house-cleaning enzyme that removes non-canonical purine nucleotides from the nucleotide pool, thus preventing their incorporation into DNA/RNA and avoiding chromosomal lesions. This chain is dITP/XTP pyrophosphatase, found in Lactiplantibacillus plantarum (strain ATCC BAA-793 / NCIMB 8826 / WCFS1) (Lactobacillus plantarum).